Reading from the N-terminus, the 257-residue chain is Hydroxyethylthiazole kinase 1 (257 aa).

Met-41 contacts substrate. ATP is bound by residues Lys-117 and Thr-162. Residue Gly-189 coordinates substrate.

The protein belongs to the Thz kinase family. Mg(2+) serves as cofactor.

The catalysed reaction is 5-(2-hydroxyethyl)-4-methylthiazole + ATP = 4-methyl-5-(2-phosphooxyethyl)-thiazole + ADP + H(+). It participates in cofactor biosynthesis; thiamine diphosphate biosynthesis; 4-methyl-5-(2-phosphoethyl)-thiazole from 5-(2-hydroxyethyl)-4-methylthiazole: step 1/1. Catalyzes the phosphorylation of the hydroxyl group of 4-methyl-5-beta-hydroxyethylthiazole (THZ). The protein is Hydroxyethylthiazole kinase 1 of Oceanobacillus iheyensis (strain DSM 14371 / CIP 107618 / JCM 11309 / KCTC 3954 / HTE831).